Reading from the N-terminus, the 181-residue chain is Cyclic AMP-dependent transcription factor ATF-3 (181 aa).

Residues 76 to 97 form a disordered region; sequence VTKAEVAPEEDERKKRRRERNK. A Glycyl lysine isopeptide (Lys-Gly) (interchain with G-Cter in SUMO2) cross-link involves residue Lys-78. The bZIP domain maps to 86-149; that stretch reads DERKKRRRER…QHLIYMLNLH (64 aa). Residues 88 to 110 form a basic motif region; the sequence is RKKRRRERNKIAAAKCRNKKKEK. Residues 114–142 are leucine-zipper; it reads LQKESEKLESVNAELKAQIEELKNEKQHL. Thr-162 carries the phosphothreonine modification. Lys-175 is covalently cross-linked (Glycyl lysine isopeptide (Lys-Gly) (interchain with G-Cter in SUMO2)).

It belongs to the bZIP family. ATF subfamily. As to quaternary structure, binds DNA as a homodimer or a heterodimer. Interacts with KAT5; promoting KAT5 autoacetylation and KAT5 deubiquitination by USP7.

The protein localises to the nucleus. Functionally, this protein binds the cAMP response element (CRE) (consensus: 5'-GTGACGT[AC][AG]-3'), a sequence present in many viral and cellular promoters. Represses transcription from promoters with ATF sites. It may repress transcription by stabilizing the binding of inhibitory cofactors at the promoter. The protein is Cyclic AMP-dependent transcription factor ATF-3 (ATF3) of Bos taurus (Bovine).